The primary structure comprises 329 residues: Lipoyl synthase (329 aa).

Residues cysteine 72, cysteine 77, cysteine 83, cysteine 98, cysteine 102, cysteine 105, and serine 313 each contribute to the [4Fe-4S] cluster site. The Radical SAM core domain occupies 83 to 303 (CWSHGTATIM…QIGLKKGFFE (221 aa)).

The protein belongs to the radical SAM superfamily. Lipoyl synthase family. [4Fe-4S] cluster is required as a cofactor.

It localises to the cytoplasm. The enzyme catalyses [[Fe-S] cluster scaffold protein carrying a second [4Fe-4S](2+) cluster] + N(6)-octanoyl-L-lysyl-[protein] + 2 oxidized [2Fe-2S]-[ferredoxin] + 2 S-adenosyl-L-methionine + 4 H(+) = [[Fe-S] cluster scaffold protein] + N(6)-[(R)-dihydrolipoyl]-L-lysyl-[protein] + 4 Fe(3+) + 2 hydrogen sulfide + 2 5'-deoxyadenosine + 2 L-methionine + 2 reduced [2Fe-2S]-[ferredoxin]. It functions in the pathway protein modification; protein lipoylation via endogenous pathway; protein N(6)-(lipoyl)lysine from octanoyl-[acyl-carrier-protein]: step 2/2. Its function is as follows. Catalyzes the radical-mediated insertion of two sulfur atoms into the C-6 and C-8 positions of the octanoyl moiety bound to the lipoyl domains of lipoate-dependent enzymes, thereby converting the octanoylated domains into lipoylated derivatives. The protein is Lipoyl synthase of Legionella pneumophila (strain Corby).